The primary structure comprises 344 residues: Adenosine deaminase (344 aa).

Zn(2+) is bound by residues histidine 14 and histidine 16. Substrate is bound by residues histidine 16, aspartate 18, and glycine 177. Histidine 204 contacts Zn(2+). Catalysis depends on glutamate 207, which acts as the Proton donor. Residue aspartate 284 participates in Zn(2+) binding.

Belongs to the metallo-dependent hydrolases superfamily. Adenosine and AMP deaminases family. Adenosine deaminase subfamily. Zn(2+) is required as a cofactor.

The catalysed reaction is adenosine + H2O + H(+) = inosine + NH4(+). It carries out the reaction 2'-deoxyadenosine + H2O + H(+) = 2'-deoxyinosine + NH4(+). Functionally, catalyzes the hydrolytic deamination of adenosine and 2-deoxyadenosine. In Haemophilus ducreyi (strain 35000HP / ATCC 700724), this protein is Adenosine deaminase.